The following is a 196-amino-acid chain: dCTP deaminase, dUMP-forming (196 aa).

Residues 101-106 (KSSLGR), D119, 127-129 (TLE), Q148, Y162, and Q174 each bind dCTP. The active-site Proton donor/acceptor is E129.

Belongs to the dCTP deaminase family. In terms of assembly, homotrimer.

It carries out the reaction dCTP + 2 H2O = dUMP + NH4(+) + diphosphate. It functions in the pathway pyrimidine metabolism; dUMP biosynthesis; dUMP from dCTP: step 1/1. Functionally, bifunctional enzyme that catalyzes both the deamination of dCTP to dUTP and the hydrolysis of dUTP to dUMP without releasing the toxic dUTP intermediate. This chain is dCTP deaminase, dUMP-forming, found in Thermobifida fusca (strain YX).